The sequence spans 619 residues: MNASGSGYPLASLYVGDLHPDVTEAMLYEKFSPAGPILSIRVCRDVATRRSLGYAYINFQQPADAERALDTMNFEMLKGQPIRIMWSQRDPGLRKSGVGNIFIKNLEDSIDNKALYDTFSTFGNILSCKVACDEHGSRGFGFVHFETHEAAQQAINTMNGMLLNDRKVFVGHFKSRREREAELGARALEFTNIYVKNLPVDVDEQGLQDLFSQFGKMLSVKVMRDNSGHSRCFGFVNFEKHEEAQKAVVHMNGKEVSGRLLYAGRAQKRVERQNELKRRFEQMKQDRLRRYQGVNLYVKNLDDSIDDDKLRKEFSPYGVITSAKVMTEGGHSKGFGFVCFSSPEEATKAVTEMNGRIVGTKPLYVALAQRKEERKAILTNQYMQRLSTMRTLSNPLLGSFQQPSSYFLPAMPQPPAQAAYYGCGPVTPTQPAPRWTSQPPRPSSAYPPGASMVRPPVVPRRPPAHISSVRQASTQVPRTVPHTQRVANIGTQTTGPSGVGCCTPGRPLLPCKCSSAAHSTYRVQEPAVHIPGQEPLTASMLAAAPLHEQKQMIGERLYPLIHDVHTQLAGKITGMLLEIDNSELLLMLESPESLHAKIDEAVAVLQAHQAMEQPKAYMH.

4 consecutive RRM domains span residues 11–89 (ASLY…WSQR), 99–175 (GNIF…HFKS), 191–268 (TNIY…RAQK), and 294–370 (VNLY…LAQR). Positions 431 to 458 (PAPRWTSQPPRPSSAYPPGASMVRPPVV) are disordered. Positions 533 to 610 (QEPLTASMLA…AVAVLQAHQA (78 aa)) constitute a PABC domain.

The protein belongs to the polyadenylate-binding protein type-1 family. As to expression, expressed in ovary and testis. Also expressed in pancreas, liver and thymus, and at lower levels in other somatic tissues including brain and lung.

The protein resides in the cytoplasm. Functionally, poly(A)-binding protein involved in oocyte maturation and early embryo development. It is required for cytosolic mRNA polyadenylation and translational activation of maternally stored mRNA in oocytes. This chain is Polyadenylate-binding protein 1-like, found in Homo sapiens (Human).